Here is a 147-residue protein sequence, read N- to C-terminus: Small ribosomal subunit protein uS12 (147 aa).

Belongs to the universal ribosomal protein uS12 family. Part of the 30S ribosomal subunit.

With S4 and S5 plays an important role in translational accuracy. Located at the interface of the 30S and 50S subunits. The polypeptide is Small ribosomal subunit protein uS12 (Pyrobaculum calidifontis (strain DSM 21063 / JCM 11548 / VA1)).